Reading from the N-terminus, the 144-residue chain is Large ribosomal subunit protein uL15 (144 aa).

The interval 1-53 is disordered; sequence MRLNTLSPAEGAKHAPKRVGRGIGSGLGKTAGRGHKGQNSRSGGGVRRGFEGG. The span at 21–31 shows a compositional bias: gly residues; that stretch reads RGIGSGLGKTA.

Belongs to the universal ribosomal protein uL15 family. In terms of assembly, part of the 50S ribosomal subunit.

Its function is as follows. Binds to the 23S rRNA. The protein is Large ribosomal subunit protein uL15 of Serratia proteamaculans (strain 568).